Reading from the N-terminus, the 128-residue chain is UPF0325 protein CKO_03204 (128 aa).

Belongs to the UPF0325 family.

This Citrobacter koseri (strain ATCC BAA-895 / CDC 4225-83 / SGSC4696) protein is UPF0325 protein CKO_03204.